The primary structure comprises 229 residues: Clathrin light chain B (229 aa).

2 stretches are compositionally biased toward low complexity: residues 1 to 17 (MAED…GAPE) and 45 to 58 (GAPA…AQPG). Residues 1–70 (MAEDFGFFSS…SGAGSEDMST (70 aa)) form a disordered region. A phosphoserine mark is found at S11 and S13. The interval 93–155 (ADRLTQEPES…QVEKNKINNR (63 aa)) is involved in binding clathrin heavy chain. T187 is modified (phosphothreonine). Cysteines 199 and 209 form a disulfide. The residue at position 204 (K204) is an N6-acetyllysine. A Phosphoserine modification is found at S217.

Belongs to the clathrin light chain family. In terms of assembly, clathrin coats are formed from molecules containing 3 heavy chains and 3 light chains. Interacts (via N-terminus) with HIP1. Interacts with HIP1R.

The protein resides in the cytoplasmic vesicle membrane. The protein localises to the membrane. It is found in the coated pit. Its function is as follows. Clathrin is the major protein of the polyhedral coat of coated pits and vesicles. The chain is Clathrin light chain B (Cltb) from Mus musculus (Mouse).